The following is a 278-amino-acid chain: Inner membrane mitoribosome receptor MBA1, mitochondrial (278 aa).

The N-terminal 33 residues, 1–33 (MSVLRSTCLFFPPRSLLISFNKRRLFSTSRLIL), are a transit peptide targeting the mitochondrion.

Interacts with OXA1 and MDM38. Binds to mitoribosomes in order to recruit them to the mitochondrial inner membrane.

Its subcellular location is the mitochondrion inner membrane. Mitochondrial inner membrane-associated mitoribosome receptor that spatially aligns the mitoribosome exit tunnel with the membrane insertion machinery and allows cotranslational protein membrane insertion. The protein is Inner membrane mitoribosome receptor MBA1, mitochondrial of Saccharomyces cerevisiae (strain ATCC 204508 / S288c) (Baker's yeast).